The sequence spans 432 residues: Peptidase B (432 aa).

The Mn(2+) site is built by Lys-196 and Asp-201. Lys-208 is an active-site residue. The Mn(2+) site is built by Asp-219, Asp-278, and Glu-280. Arg-282 is a catalytic residue.

The protein belongs to the peptidase M17 family. Homohexamer. The cofactor is Mn(2+).

It localises to the cytoplasm. It catalyses the reaction Release of an N-terminal amino acid, Xaa, from a peptide or arylamide. Xaa is preferably Glu or Asp but may be other amino acids, including Leu, Met, His, Cys and Gln.. In terms of biological role, probably plays an important role in intracellular peptide degradation. The chain is Peptidase B from Vibrio parahaemolyticus serotype O3:K6 (strain RIMD 2210633).